The sequence spans 553 residues: MSIRTLDGRTFAEMILAGAQNLSQNASAVDALNVFPVPDGDTGTNMNLSMTSGAREVEQMDTDDIGKVGSALSKGLLMGARGNSGVILSQLFRGFSKNIETKKEINALEFAAALQAGVDMAYKAVMKPVEGTILTVAKDAAKKAMILAEKETDITALMTAVTEEAEASLNRTPELLPVLKEVGVVDSGGKGLLCVYEGFLASLKGETVPQKAVLPSLDDMVSAEHHKSAQSMMNTEDIEFGFCTEVMVRLDQTKREFDEGTFRQDLSQFGDSLLVIADESLAKVHIHAEEPGNVLNYAQHYGELIKIKIENMREQHTSIISQESKPADNETPPAKQPYGIVTVAMGEGIADLFKSIGASVVIEGGQTMNPSTEDIVDAVKSVNADTVFILPNNSNIIMAANQAASVVDEQVFVIPAKTVPQGMSALLAFNPDQEAEANEANMLSAIQQVKSGQVTFSVRDTHIDGKDIKKGDFMGILNGTIIGTSENQLSAAKMLLSEMIGEDDEIVTILYGEDASQEEAEQLEAFLSEKYEEIEVEIHNGKQPLYSYIVSAE.

In terms of domain architecture, DhaL spans 9-201; the sequence is RTFAEMILAG…LLCVYEGFLA (193 aa).

This Bacillus subtilis (strain 168) protein is Protein YloV (yloV).